A 79-amino-acid polypeptide reads, in one-letter code: Small ribosomal subunit protein bS18B (79 aa).

Residues 1–11 (MPRPRKADRTP) show a composition bias toward basic and acidic residues. The tract at residues 1–24 (MPRPRKADRTPARQRPNPLDRDGV) is disordered.

It belongs to the bacterial ribosomal protein bS18 family. As to quaternary structure, part of the 30S ribosomal subunit. Forms a tight heterodimer with protein bS6.

Functionally, binds as a heterodimer with protein bS6 to the central domain of the 16S rRNA, where it helps stabilize the platform of the 30S subunit. The chain is Small ribosomal subunit protein bS18B from Streptomyces coelicolor (strain ATCC BAA-471 / A3(2) / M145).